A 394-amino-acid chain; its full sequence is Elongation factor Tu (394 aa).

The region spanning 10 to 204 is the tr-type G domain; that stretch reads KPHINIGTIG…AVDDNIPTPE (195 aa). A G1 region spans residues 19 to 26; sequence GHVDHGKT. GTP is bound at residue 19-26; the sequence is GHVDHGKT. Threonine 26 serves as a coordination point for Mg(2+). Residues 60–64 are G2; sequence GITIN. The interval 81–84 is G3; sequence DCPG. GTP is bound by residues 81–85 and 136–139; these read DCPGH and NKID. Positions 136–139 are G4; it reads NKID. The interval 174-176 is G5; the sequence is SAL.

It belongs to the TRAFAC class translation factor GTPase superfamily. Classic translation factor GTPase family. EF-Tu/EF-1A subfamily. In terms of assembly, monomer.

Its subcellular location is the cytoplasm. The catalysed reaction is GTP + H2O = GDP + phosphate + H(+). Its function is as follows. GTP hydrolase that promotes the GTP-dependent binding of aminoacyl-tRNA to the A-site of ribosomes during protein biosynthesis. In Chlamydia caviae (strain ATCC VR-813 / DSM 19441 / 03DC25 / GPIC) (Chlamydophila caviae), this protein is Elongation factor Tu.